The primary structure comprises 118 residues: Superoxide-generating NADPH oxidase light chain subunit (118 aa).

4 consecutive transmembrane segments (helical) span residues 9–29, 36–56, 62–82, and 83–103; these read WAAM…IMGI, IAIY…PLSF, AIFH…VLCY, and FLVP…VFLI.

The protein belongs to the p22phox family. As to quaternary structure, composed of a heavy chain and a light chain.

It is found in the cell membrane. In terms of biological role, critical component of the membrane-bound oxidase of phagocytes that generates superoxide. In Dictyostelium discoideum (Social amoeba), this protein is Superoxide-generating NADPH oxidase light chain subunit (cybA).